The chain runs to 268 residues: Phosphatidylglycerol--prolipoprotein diacylglyceryl transferase (268 aa).

Helical transmembrane passes span 23 to 43 (IGLR…RWLA), 62 to 82 (LLFN…VFFY), 97 to 117 (VWEG…AMIW), 132 to 152 (FVAP…FINL), 179 to 199 (SQLY…NIFI), 206 to 226 (ASVA…VEYV), and 241 to 261 (GQAL…WAYS). Arg-145 is an a 1,2-diacyl-sn-glycero-3-phospho-(1'-sn-glycerol) binding site.

The protein belongs to the Lgt family.

It localises to the cell inner membrane. It carries out the reaction L-cysteinyl-[prolipoprotein] + a 1,2-diacyl-sn-glycero-3-phospho-(1'-sn-glycerol) = an S-1,2-diacyl-sn-glyceryl-L-cysteinyl-[prolipoprotein] + sn-glycerol 1-phosphate + H(+). Its pathway is protein modification; lipoprotein biosynthesis (diacylglyceryl transfer). Its function is as follows. Catalyzes the transfer of the diacylglyceryl group from phosphatidylglycerol to the sulfhydryl group of the N-terminal cysteine of a prolipoprotein, the first step in the formation of mature lipoproteins. The polypeptide is Phosphatidylglycerol--prolipoprotein diacylglyceryl transferase (Haemophilus influenzae (strain PittEE)).